The chain runs to 134 residues: Rhoptry antigen protein (134 aa).

Disordered regions lie at residues 21–82 (MGPL…SNLK) and 96–134 (QLDK…ENEL). Residues 29–38 (KSTSAASTSD) show a composition bias toward polar residues. The span at 39–54 (ELSGSEGPSTESTSTG) shows a compositional bias: low complexity. Residues 57 to 69 (GEDKTTDNTYKEM) are compositionally biased toward basic and acidic residues. Residues 102-113 (PKKKKSKRKKKR) are compositionally biased toward basic residues. Positions 114–126 (DSSSDRILLEESK) are enriched in basic and acidic residues.

The protein is Rhoptry antigen protein of Plasmodium falciparum.